Reading from the N-terminus, the 132-residue chain is Small ribosomal subunit protein uS8 (132 aa).

It belongs to the universal ribosomal protein uS8 family. Part of the 30S ribosomal subunit. Contacts proteins S5 and S12.

One of the primary rRNA binding proteins, it binds directly to 16S rRNA central domain where it helps coordinate assembly of the platform of the 30S subunit. The sequence is that of Small ribosomal subunit protein uS8 from Ehrlichia chaffeensis (strain ATCC CRL-10679 / Arkansas).